A 258-amino-acid chain; its full sequence is UPF0246 protein Pnap_3166 (258 aa).

It belongs to the UPF0246 family.

This is UPF0246 protein Pnap_3166 from Polaromonas naphthalenivorans (strain CJ2).